A 295-amino-acid chain; its full sequence is Tyrosine transport system permease protein (295 aa).

8 helical membrane-spanning segments follow: residues 3–23 (GIIS…GVYI), 57–77 (VVAT…TGIL), 81–101 (FKIS…SINL), 122–142 (ISPI…LDLF), 173–193 (ILGL…MAQF), 200–220 (NMGI…ITLF), 232–252 (IIVG…LGML), and 256–276 (LKLI…LNIS).

Belongs to the binding-protein-dependent transport system permease family. The complex is probably composed of two ATP-binding proteins (CDR20291_0806), two transmembrane proteins (CDR20291_0807) and a solute-binding protein (CDR20291_0805).

It is found in the cell membrane. Its function is as follows. Probably part of an ABC transporter complex involved in tyrosine uptake. May also import phenylalanine. Probably responsible for the translocation of the substrate across the membrane. The polypeptide is Tyrosine transport system permease protein (Clostridioides difficile (strain R20291) (Peptoclostridium difficile)).